A 444-amino-acid polypeptide reads, in one-letter code: Exodeoxyribonuclease 7 large subunit (444 aa).

This sequence belongs to the XseA family. Heterooligomer composed of large and small subunits.

Its subcellular location is the cytoplasm. The enzyme catalyses Exonucleolytic cleavage in either 5'- to 3'- or 3'- to 5'-direction to yield nucleoside 5'-phosphates.. Functionally, bidirectionally degrades single-stranded DNA into large acid-insoluble oligonucleotides, which are then degraded further into small acid-soluble oligonucleotides. The sequence is that of Exodeoxyribonuclease 7 large subunit from Rickettsia akari (strain Hartford).